Here is a 150-residue protein sequence, read N- to C-terminus: 3-dehydroquinate dehydratase (150 aa).

Residue Tyr-26 is the Proton acceptor of the active site. Substrate contacts are provided by Asn-77, His-83, and Asp-90. Catalysis depends on His-103, which acts as the Proton donor. Residues 104–105 and Arg-114 contribute to the substrate site; that span reads LS.

It belongs to the type-II 3-dehydroquinase family. As to quaternary structure, homododecamer.

It catalyses the reaction 3-dehydroquinate = 3-dehydroshikimate + H2O. It functions in the pathway metabolic intermediate biosynthesis; chorismate biosynthesis; chorismate from D-erythrose 4-phosphate and phosphoenolpyruvate: step 3/7. Catalyzes a trans-dehydration via an enolate intermediate. The protein is 3-dehydroquinate dehydratase of Vibrio cholerae serotype O1 (strain ATCC 39541 / Classical Ogawa 395 / O395).